We begin with the raw amino-acid sequence, 396 residues long: Phosphopentomutase (396 aa).

The Mn(2+) site is built by aspartate 13, aspartate 288, histidine 293, aspartate 329, histidine 330, and histidine 341.

Belongs to the phosphopentomutase family. It depends on Mn(2+) as a cofactor.

It is found in the cytoplasm. It catalyses the reaction 2-deoxy-alpha-D-ribose 1-phosphate = 2-deoxy-D-ribose 5-phosphate. It carries out the reaction alpha-D-ribose 1-phosphate = D-ribose 5-phosphate. It functions in the pathway carbohydrate degradation; 2-deoxy-D-ribose 1-phosphate degradation; D-glyceraldehyde 3-phosphate and acetaldehyde from 2-deoxy-alpha-D-ribose 1-phosphate: step 1/2. Its function is as follows. Isomerase that catalyzes the conversion of deoxy-ribose 1-phosphate (dRib-1-P) and ribose 1-phosphate (Rib-1-P) to deoxy-ribose 5-phosphate (dRib-5-P) and ribose 5-phosphate (Rib-5-P), respectively. The sequence is that of Phosphopentomutase from Clostridium beijerinckii (strain ATCC 51743 / NCIMB 8052) (Clostridium acetobutylicum).